Reading from the N-terminus, the 116-residue chain is Propanediol dehydratase-reactivating factor small subunit (116 aa).

Position 31 (E31) interacts with Mg(2+).

The protein belongs to the DdrB/PduH family. In terms of assembly, forms a heterotetramer PduG(2)/PduH(2). The cofactor is Mg(2+).

Its subcellular location is the bacterial microcompartment. The enzyme catalyses ATP + H2O = ADP + phosphate + H(+). The protein operates within polyol metabolism; 1,2-propanediol degradation. Small subunit of the propanediol dehydratase-reactivating factor (DDR), which reactivates suicidally inhibited adenosylcobalamin-dependent propanediol dehydratase (diol dehydratase, DDH) found in the bacterial microcompartment (BMC) dedicated to 1,2-propanediol (1,2-PD) degradation. Reactivates inactivated DDH in the presence of ATP, Mg(2+) and free adenosylcobalamin (AdoCbl), by mediating the exchange of the tightly bound damaged cofactor AdoCbl for a free intact one. In terms of biological role, expression of a cosmid containing the full 21-gene pdu operon in E.coli allows E.coli to grow on 1,2-propanediol (1,2-PD) with the appearance of bacterial microcompartments (BMC) in its cytoplasm. Its function is as follows. The 1,2-PD-specific bacterial microcompartment (BMC) concentrates low levels of 1,2-PD catabolic enzymes, concentrates volatile reaction intermediates thus enhancing pathway flux and keeps the level of toxic, mutagenic propionaldehyde low. This Citrobacter freundii protein is Propanediol dehydratase-reactivating factor small subunit.